The chain runs to 109 residues: UPF0122 protein Cbei_1174 (109 aa).

This sequence belongs to the UPF0122 family.

Its function is as follows. Might take part in the signal recognition particle (SRP) pathway. This is inferred from the conservation of its genetic proximity to ftsY/ffh. May be a regulatory protein. This Clostridium beijerinckii (strain ATCC 51743 / NCIMB 8052) (Clostridium acetobutylicum) protein is UPF0122 protein Cbei_1174.